The chain runs to 57 residues: U13-myrmicitoxin-Mri1a (57 aa).

The first 23 residues, Met-1 to Ala-23, serve as a signal peptide directing secretion. A propeptide spanning residues Glu-24–Ala-29 is cleaved from the precursor. Glutamic acid 1-amide is present on Glu-56.

Expressed by the venom gland.

Its subcellular location is the secreted. Induces paralysis 1 hour after injection into insects (blowfly L.caesar) but does not appear to be lethal. This is U13-myrmicitoxin-Mri1a from Manica rubida (European giant red ant).